The following is a 742-amino-acid chain: Kanadaptin (742 aa).

Positions 1–16 (MADILSQSETLASQDL) are enriched in polar residues. Positions 1–112 (MADILSQSET…PPWGGPATAP (112 aa)) are disordered. Low complexity predominate over residues 27–43 (VSPAARSKAPASSSSNP). Phosphoserine is present on Ser28. Basic and acidic residues predominate over residues 72–82 (GDFRSLQEEQS). Phosphoserine is present on Ser90. Over residues 96–106 (RAPPYQEPPWG) the composition is skewed to pro residues. One can recognise an FHA domain in the interval 135-195 (CLFGRLSGCD…HGTFLNKTRI (61 aa)). Residues 254–282 (LGEDSDEEEEMDTSERKINAGSQDDEMGC) form a disordered region. Over residues 256 to 265 (EDSDEEEEMD) the composition is skewed to acidic residues. Ser258 and Ser412 each carry phosphoserine. Lys441 is covalently cross-linked (Glycyl lysine isopeptide (Lys-Gly) (interchain with G-Cter in SUMO2)). A coiled-coil region spans residues 443–476 (ETFESLVAKLNDAERELSEISERLKASSQVLSES). Ser476 carries the phosphoserine modification. The segment at 565–742 (LKTGTVGKLP…RTHLNDKYGY (178 aa)) is disordered. Residues 591–606 (PEVEEEEEEEEEEEKE) are compositionally biased toward acidic residues. Positions 607–619 (KEEHEKKKLEDGS) are enriched in basic and acidic residues. Residues Ser655 and Ser658 each carry the phosphoserine modification. Low complexity predominate over residues 699 to 708 (PGPGKLPPTL). A compositionally biased stretch (basic and acidic residues) spans 732 to 742 (GRTHLNDKYGY).

As to expression, ubiquitously expressed.

The protein localises to the nucleus. It is found in the cytoplasm. This chain is Kanadaptin (SLC4A1AP), found in Homo sapiens (Human).